A 324-amino-acid polypeptide reads, in one-letter code: 26S proteasome non-ATPase regulatory subunit 7 (324 aa).

The 136-residue stretch at 9–144 folds into the MPN domain; that stretch reads VVVHPLVLLS…TEAYISVEEV (136 aa). Lysine 180 is covalently cross-linked (Glycyl lysine isopeptide (Lys-Gly) (interchain with G-Cter in ubiquitin)). 4 positions are modified to N6-acetyllysine: lysine 204, lysine 214, lysine 316, and lysine 317. The tract at residues 281 to 324 is disordered; it reads ANRDAEKKEGQEKEESKKDRKEDKEKDKDKEKSDVKKEEKKEKK.

This sequence belongs to the peptidase M67A family. In terms of assembly, component of the 19S proteasome regulatory particle complex. The 26S proteasome consists of a 20S core particle (CP) and two 19S regulatory subunits (RP). The regulatory particle is made of a lid composed of 9 subunits including PSMD7, a base containing 6 ATPases and few additional components. Within the complex, PSMD7 interacts with subunit PSMD4 through their respective MPN domain. Interacts with TRIM5.

Functionally, component of the 26S proteasome, a multiprotein complex involved in the ATP-dependent degradation of ubiquitinated proteins. This complex plays a key role in the maintenance of protein homeostasis by removing misfolded or damaged proteins, which could impair cellular functions, and by removing proteins whose functions are no longer required. Therefore, the proteasome participates in numerous cellular processes, including cell cycle progression, apoptosis, or DNA damage repair. The polypeptide is 26S proteasome non-ATPase regulatory subunit 7 (PSMD7) (Homo sapiens (Human)).